Reading from the N-terminus, the 538-residue chain is Putative outer membrane porin BglH (538 aa).

The first 25 residues, 1–25 (MFRRNIITSAILLMAPLAFSAQSLA), serve as a signal peptide directing secretion.

The protein belongs to the porin LamB (TC 1.B.3) family.

The protein localises to the cell outer membrane. Its function is as follows. May be a sugar porin with a broad carbohydrate specificity. The polypeptide is Putative outer membrane porin BglH (bglH) (Escherichia coli (strain UTI89 / UPEC)).